Here is a 181-residue protein sequence, read N- to C-terminus: ATP-dependent protease subunit HslV (181 aa).

Thr-7 is a catalytic residue. 3 residues coordinate Na(+): Ala-166, Cys-169, and Thr-172.

It belongs to the peptidase T1B family. HslV subfamily. In terms of assembly, a double ring-shaped homohexamer of HslV is capped on each side by a ring-shaped HslU homohexamer. The assembly of the HslU/HslV complex is dependent on binding of ATP.

Its subcellular location is the cytoplasm. It catalyses the reaction ATP-dependent cleavage of peptide bonds with broad specificity.. With respect to regulation, allosterically activated by HslU binding. Functionally, protease subunit of a proteasome-like degradation complex believed to be a general protein degrading machinery. The polypeptide is ATP-dependent protease subunit HslV (Anaeromyxobacter dehalogenans (strain 2CP-C)).